Reading from the N-terminus, the 32-residue chain is Conotoxin pr6b (32 aa).

4-hydroxyproline is present on residues Pro6, Pro13, Pro20, and Pro29. 3 disulfides stabilise this stretch: Cys7-Cys18, Cys14-Cys23, and Cys17-Cys31.

As to expression, expressed by the venom duct.

It is found in the secreted. In terms of biological role, intraperitoneal injection into fish (0.5 nmol) provokes vertical suspension and paralysis after 6 minutes. The sequence is that of Conotoxin pr6b from Conus parius (Cone snail).